Reading from the N-terminus, the 211-residue chain is ATP phosphoribosyltransferase (211 aa).

The protein belongs to the ATP phosphoribosyltransferase family. Short subfamily. In terms of assembly, heteromultimer composed of HisG and HisZ subunits.

It is found in the cytoplasm. It carries out the reaction 1-(5-phospho-beta-D-ribosyl)-ATP + diphosphate = 5-phospho-alpha-D-ribose 1-diphosphate + ATP. The protein operates within amino-acid biosynthesis; L-histidine biosynthesis; L-histidine from 5-phospho-alpha-D-ribose 1-diphosphate: step 1/9. In terms of biological role, catalyzes the condensation of ATP and 5-phosphoribose 1-diphosphate to form N'-(5'-phosphoribosyl)-ATP (PR-ATP). Has a crucial role in the pathway because the rate of histidine biosynthesis seems to be controlled primarily by regulation of HisG enzymatic activity. In Bacillus cereus (strain ATCC 14579 / DSM 31 / CCUG 7414 / JCM 2152 / NBRC 15305 / NCIMB 9373 / NCTC 2599 / NRRL B-3711), this protein is ATP phosphoribosyltransferase.